A 197-amino-acid chain; its full sequence is MSSKEQKTPEGQAPEEIIMDRHEEIEAVEPEASAEQVDPRDEKIANLEAQLAEAQTRERDGILRVKAEMENLRRRTELDIEKAHKFALEKFINELLPVIDSLDRALEVADKANPDMSAMVEGIELTLKSMLDVVRKFGVEVIAETNVPLDPNVHQAIAMVESDDVAPGNVLGIMQKGYTLNGRTIRAAMVTVAKAKA.

Residues 1–40 (MSSKEQKTPEGQAPEEIIMDRHEEIEAVEPEASAEQVDPR) form a disordered region.

This sequence belongs to the GrpE family. As to quaternary structure, homodimer.

The protein localises to the cytoplasm. Its function is as follows. Participates actively in the response to hyperosmotic and heat shock by preventing the aggregation of stress-denatured proteins, in association with DnaK and GrpE. It is the nucleotide exchange factor for DnaK and may function as a thermosensor. Unfolded proteins bind initially to DnaJ; upon interaction with the DnaJ-bound protein, DnaK hydrolyzes its bound ATP, resulting in the formation of a stable complex. GrpE releases ADP from DnaK; ATP binding to DnaK triggers the release of the substrate protein, thus completing the reaction cycle. Several rounds of ATP-dependent interactions between DnaJ, DnaK and GrpE are required for fully efficient folding. The polypeptide is Protein GrpE (Shigella flexneri serotype 5b (strain 8401)).